We begin with the raw amino-acid sequence, 397 residues long: Inositol 3-kinase (397 aa).

Residues Ser-228, 278–281 (GAGD), and Asn-305 each bind ATP. The active-site Proton acceptor is the Asp-281.

It belongs to the carbohydrate kinase pfkB family. As to expression, expressed in roots, leaf blade shoots, leaf sheath shoots and panicles.

The enzyme catalyses myo-inositol + ATP = 1D-myo-inositol 3-phosphate + ADP + H(+). Its function is as follows. Kinase that phosphorylates myo-inositol to produce multiple myo-inositol monophosphates. Participates in phytic acid biosynthesis in developing seeds. Phytic acid is the primary storage form of phosphorus in cereal grains and other plant seeds. The polypeptide is Inositol 3-kinase (Oryza sativa subsp. japonica (Rice)).